The sequence spans 149 residues: Cyanate hydratase (149 aa).

Active-site residues include R90, E93, and S116.

This sequence belongs to the cyanase family.

It carries out the reaction cyanate + hydrogencarbonate + 3 H(+) = NH4(+) + 2 CO2. Its function is as follows. Catalyzes the reaction of cyanate with bicarbonate to produce ammonia and carbon dioxide. The protein is Cyanate hydratase of Aquifex aeolicus (strain VF5).